The primary structure comprises 177 residues: Large ribosomal subunit protein uL6 (177 aa).

Belongs to the universal ribosomal protein uL6 family. Part of the 50S ribosomal subunit.

Functionally, this protein binds to the 23S rRNA, and is important in its secondary structure. It is located near the subunit interface in the base of the L7/L12 stalk, and near the tRNA binding site of the peptidyltransferase center. The polypeptide is Large ribosomal subunit protein uL6 (Rickettsia rickettsii (strain Iowa)).